A 384-amino-acid polypeptide reads, in one-letter code: Cobalt-precorrin-5B C(1)-methyltransferase (384 aa).

This sequence belongs to the CbiD family.

It catalyses the reaction Co-precorrin-5B + S-adenosyl-L-methionine = Co-precorrin-6A + S-adenosyl-L-homocysteine. It functions in the pathway cofactor biosynthesis; adenosylcobalamin biosynthesis; cob(II)yrinate a,c-diamide from sirohydrochlorin (anaerobic route): step 6/10. Its function is as follows. Catalyzes the methylation of C-1 in cobalt-precorrin-5B to form cobalt-precorrin-6A. The protein is Cobalt-precorrin-5B C(1)-methyltransferase of Marinomonas sp. (strain MWYL1).